The following is a 372-amino-acid chain: Alpha-L-fucosidase 3 (372 aa).

The first 23 residues, Met-1–Ala-23, serve as a signal peptide directing secretion. The Nucleophile role is filled by Ser-37. 4 N-linked (GlcNAc...) asparagine glycosylation sites follow: Asn-96, Asn-114, Asn-139, and Asn-182. Catalysis depends on residues Asp-345 and His-348.

It belongs to the 'GDSL' lipolytic enzyme family. High expression in younger leaves and in the apical region of the inflorescence stem.

The protein localises to the secreted. It is found in the extracellular space. Its subcellular location is the apoplast. It catalyses the reaction an alpha-L-fucoside + H2O = L-fucose + an alcohol. Functionally, hydrolyzes alpha-1,2-linked fucose. Also active on fucosylated xyloglucan oligosaccharides. The sequence is that of Alpha-L-fucosidase 3 (FXG1) from Arabidopsis thaliana (Mouse-ear cress).